The chain runs to 486 residues: Pup--protein ligase (486 aa).

Glu33 serves as a coordination point for Mg(2+). ATP is bound at residue Arg76. Tyr78 serves as a coordination point for Mg(2+). The active-site Proton acceptor is the Asp80. Glu86 provides a ligand contact to Mg(2+). Residues Thr89 and Trp451 each contribute to the ATP site.

The protein belongs to the Pup ligase/Pup deamidase family. Pup-conjugating enzyme subfamily.

It carries out the reaction ATP + [prokaryotic ubiquitin-like protein]-L-glutamate + [protein]-L-lysine = ADP + phosphate + N(6)-([prokaryotic ubiquitin-like protein]-gamma-L-glutamyl)-[protein]-L-lysine.. It functions in the pathway protein degradation; proteasomal Pup-dependent pathway. Its pathway is protein modification; protein pupylation. Functionally, catalyzes the covalent attachment of the prokaryotic ubiquitin-like protein modifier Pup to the proteasomal substrate proteins, thereby targeting them for proteasomal degradation. This tagging system is termed pupylation. The ligation reaction involves the side-chain carboxylate of the C-terminal glutamate of Pup and the side-chain amino group of a substrate lysine. This is Pup--protein ligase from Bifidobacterium longum (strain DJO10A).